Consider the following 643-residue polypeptide: ATP-dependent RNA helicase DeaD (643 aa).

The Q motif signature appears at 6–34; sequence TTFADLGLKAPILEALTDLGYEKPSPIQA. In terms of domain architecture, Helicase ATP-binding spans 37–208; sequence IPHLLDGRDV…RRFMKEPQEV (172 aa). 50 to 57 serves as a coordination point for ATP; it reads AQTGSGKT. Residues 156 to 159 carry the DEAD box motif; it reads DEAD. The 148-residue stretch at 232-379 folds into the Helicase C-terminal domain; the sequence is KNEALVRFLE…EVELPNAELL (148 aa). Disordered regions lie at residues 440 to 482 and 557 to 643; these read VPPV…KRER and MNMQ…GGDA. Basic and acidic residues-rich tracts occupy residues 448-482 and 567-643; these read PRRE…KRER and PRTE…GGDA.

It belongs to the DEAD box helicase family. DeaD/CsdA subfamily.

The protein localises to the cytoplasm. The enzyme catalyses ATP + H2O = ADP + phosphate + H(+). DEAD-box RNA helicase involved in various cellular processes at low temperature, including ribosome biogenesis, mRNA degradation and translation initiation. The sequence is that of ATP-dependent RNA helicase DeaD from Klebsiella pneumoniae.